The following is a 483-amino-acid chain: MRLKQDFFEQLPEFYSQVFPLGISNPHWLAWSQDAADLIEIKQPSDELLQGLSGNAHVDGASYYAQVYSGHQFGGYSPQLGDGRSIILGEALGPQGAWDVALKGAGPTPYSRHGDGRAVMRSAVREFLISEALHHLHIPTTRALAVIGSDLPVWRESQETAAITVRLAKSHIRFGHFEYFCHSERGAPAKLKQLLDFTIKQHYPDLSCDAVGYKAWFTRVVADTAKMIANWQAIGFAHGVMNTDNMSILGDTFDFGPFAFLDTFKEGFICNHSDPEGRYAFGQQPGIGLWNLQRLAQALSPIIASDDLIESLNQYQVELVKHYLLLMRGKLGLKTSAAEAEQDDHDLALIGAFTGLMERNQLDHTNTWRRFGQLDPNASHSSLRDDFVDLHGFDTWYQAYQVRLGSVDEVGLWQKERNQVNPKYILRNYLAQEAIIAVELGDLKPLHNLQRLLQNPFDEQLEFEDMAKRPPDWGQGLIMSCSS.

G81, G83, R84, K103, D115, G116, R166, and R173 together coordinate ATP. The active-site Proton acceptor is D244. The Mg(2+) site is built by N245 and D254. An ATP-binding site is contributed by D254.

The protein belongs to the SELO family. Requires Mg(2+) as cofactor. It depends on Mn(2+) as a cofactor.

The catalysed reaction is L-seryl-[protein] + ATP = 3-O-(5'-adenylyl)-L-seryl-[protein] + diphosphate. It catalyses the reaction L-threonyl-[protein] + ATP = 3-O-(5'-adenylyl)-L-threonyl-[protein] + diphosphate. It carries out the reaction L-tyrosyl-[protein] + ATP = O-(5'-adenylyl)-L-tyrosyl-[protein] + diphosphate. The enzyme catalyses L-histidyl-[protein] + UTP = N(tele)-(5'-uridylyl)-L-histidyl-[protein] + diphosphate. The catalysed reaction is L-seryl-[protein] + UTP = O-(5'-uridylyl)-L-seryl-[protein] + diphosphate. It catalyses the reaction L-tyrosyl-[protein] + UTP = O-(5'-uridylyl)-L-tyrosyl-[protein] + diphosphate. Functionally, nucleotidyltransferase involved in the post-translational modification of proteins. It can catalyze the addition of adenosine monophosphate (AMP) or uridine monophosphate (UMP) to a protein, resulting in modifications known as AMPylation and UMPylation. This chain is Protein nucleotidyltransferase YdiU, found in Shewanella pealeana (strain ATCC 700345 / ANG-SQ1).